The chain runs to 281 residues: NAD kinase (281 aa).

Asp66 serves as the catalytic Proton acceptor. Residues 66 to 67 (DG), 137 to 138 (ND), Arg148, Arg165, Asp167, and 178 to 183 (TAYSMS) contribute to the NAD(+) site.

This sequence belongs to the NAD kinase family. A divalent metal cation is required as a cofactor.

It localises to the cytoplasm. It catalyses the reaction NAD(+) + ATP = ADP + NADP(+) + H(+). Its function is as follows. Involved in the regulation of the intracellular balance of NAD and NADP, and is a key enzyme in the biosynthesis of NADP. Catalyzes specifically the phosphorylation on 2'-hydroxyl of the adenosine moiety of NAD to yield NADP. The chain is NAD kinase from Chlorobium phaeovibrioides (strain DSM 265 / 1930) (Prosthecochloris vibrioformis (strain DSM 265)).